A 258-amino-acid polypeptide reads, in one-letter code: 4-hydroxy-tetrahydrodipicolinate reductase (258 aa).

Residue 10–15 (GCLGRM) participates in NAD(+) binding. K38 is a binding site for NADP(+). NAD(+) contacts are provided by residues 89 to 91 (GTT) and 113 to 116 (AGNM). H146 acts as the Proton donor/acceptor in catalysis. H147 contacts (S)-2,3,4,5-tetrahydrodipicolinate. Catalysis depends on K150, which acts as the Proton donor. 156–157 (GT) contacts (S)-2,3,4,5-tetrahydrodipicolinate.

This sequence belongs to the DapB family.

The protein localises to the cytoplasm. The enzyme catalyses (S)-2,3,4,5-tetrahydrodipicolinate + NAD(+) + H2O = (2S,4S)-4-hydroxy-2,3,4,5-tetrahydrodipicolinate + NADH + H(+). The catalysed reaction is (S)-2,3,4,5-tetrahydrodipicolinate + NADP(+) + H2O = (2S,4S)-4-hydroxy-2,3,4,5-tetrahydrodipicolinate + NADPH + H(+). It functions in the pathway amino-acid biosynthesis; L-lysine biosynthesis via DAP pathway; (S)-tetrahydrodipicolinate from L-aspartate: step 4/4. Functionally, catalyzes the conversion of 4-hydroxy-tetrahydrodipicolinate (HTPA) to tetrahydrodipicolinate. The protein is 4-hydroxy-tetrahydrodipicolinate reductase of Pelagibacter ubique (strain HTCC1062).